The following is a 718-amino-acid chain: Zinc finger protein 39 (718 aa).

The 72-residue stretch at 59-130 (VSFEDVSVDF…EDVPKQSRAD (72 aa)) folds into the KRAB domain. A C2H2-type 1 zinc finger spans residues 298–320 (FECSICKKTFCTKCELMKHKKIH). A C2H2-type 2; degenerate zinc finger spans residues 353-375 (HRCKQCEKCFHQKNQQNVHERVP). 11 consecutive C2H2-type zinc fingers follow at residues 409–431 (YGCNLCGKAFYRKSHLGRHQKIH), 437–459 (YGCEECKKTFYHKSSLTIHQRTH), 465–487 (YECKKCRKTFYCKSDLNVHHRTH), 493–515 (YECDECRKTFYSKSHLVIHQKVH), 521–543 (YECEECQKAFSRKSNLTVHQKTH), 549–571 (YECNVCGKTFHRQSHLNMHQGTH), 577–599 (YQCEECGKAFYQKSSLRRHQRNH), 605–627 (YACEECRKTFLHKSSLTVHQRSH), 633–655 (YSCEECRKTFYSKSHLTVHQRTH), 661–683 (YECKLCKKAFHQKSYLNRHQVTH), and 689–711 (FECQECRKTFYHKSSLTVHQRIH).

In terms of tissue distribution, predominantly in the spermatocytes and spermatids of testes.

The protein localises to the nucleus. A putative DNA-binding regulatory protein associated with meiosis in spermatogenesis. The protein is Zinc finger protein 39 (Zfp39) of Mus musculus (Mouse).